The sequence spans 912 residues: MINSLLTRVFGSRNERQLRQLTRLVTQINALEPTIEKLSDAELQAKTPEFKQRLAAGESLDKILPEAFAVCREASRRVLGMRHYDVQLIGGMVLHLGKIAEMRTGEGKTLVATLPVYLNALQGEGVHVVTVNDYLARRDAAQMGKLYNWLGLSVGVVYPGMPHSDKREAYGSDITYGTNNEFGFDYLRDNMALSRADRYQRTLHYAIVDEVDSILIDEARTPLIISGPADESPELYIRVNRIVPQLTKQESEEGEGDFWVDEKGKQVHLSEAGMGHAEELLLQAGILENAEDGLYAAQNLSVVHHLNAALRAHAIYQRDVDYIVRDGEVVIVDEFTGRTLSGRRWSDGLHQAVEAKEGVPVQRENQTLASITFQNLFRMYKKLSGMTGTADTEAYEFQSIYGLEVVVIPTNRPTVRKDHPDQVFLNRKGKFNAVLADIEDCAKRGQPVLVGTTSIETSEMLSEHLRKAGVKHEVLNAKQHEREATIVANAGQPGAVTIATNMAGRGTDIVLGGSLESEYHALGEDATEDARFKIKTDWQRRHDAVKAAGGLHIIGTERHESRRIDNQLRGRAGRQGDPGSSRFYLSLEDNLMRIFASDWVQKAMRMMGMKEDDVIEDRLVSRQIEKAQRKVEAHNFDIRKNLLDFDDVNNDQRKVIYAQRDELLDAESVKDNVDGIRGDVIYDLVARFVPPNSVDEQWDVKGLEATLESELGVTLSLTDMVRTQEEIDAEQIAAKVQAAVDAHFAEKEAAVGNDTMRALEKHVMLTVLDQGWKEHLAKMDYLRQGIYLRGYAQKQPKQEYKKEAFELFSEMLENVKREVIHLLARVRIRSEEEVAELEEQERLHAQARLMASQFQHQDVGGYGTDEEAAQVQSGNAPVPVSQVTRDEPKVGRNDPCPCGSGKKYKHCHGQLS.

ATP contacts are provided by residues glutamine 87, glycine 105–threonine 109, and aspartate 508. Positions aspartate 865–serine 912 are disordered. The Zn(2+) site is built by cysteine 896, cysteine 898, cysteine 907, and histidine 908. Positions lysine 902–serine 912 are enriched in basic residues.

It belongs to the SecA family. Monomer and homodimer. Part of the essential Sec protein translocation apparatus which comprises SecA, SecYEG and auxiliary proteins SecDF-YajC and YidC. Zn(2+) serves as cofactor.

It is found in the cell inner membrane. It localises to the cytoplasm. It catalyses the reaction ATP + H2O + cellular proteinSide 1 = ADP + phosphate + cellular proteinSide 2.. Part of the Sec protein translocase complex. Interacts with the SecYEG preprotein conducting channel. Has a central role in coupling the hydrolysis of ATP to the transfer of proteins into and across the cell membrane, serving both as a receptor for the preprotein-SecB complex and as an ATP-driven molecular motor driving the stepwise translocation of polypeptide chains across the membrane. The polypeptide is Protein translocase subunit SecA (Xanthomonas oryzae pv. oryzae (strain MAFF 311018)).